A 1403-amino-acid polypeptide reads, in one-letter code: DNA-directed RNA polymerase subunit beta' (1403 aa).

Residues cysteine 71, cysteine 73, cysteine 86, and cysteine 89 each contribute to the Zn(2+) site. Residues aspartate 462, aspartate 464, and aspartate 466 each coordinate Mg(2+). 4 residues coordinate Zn(2+): cysteine 811, cysteine 885, cysteine 892, and cysteine 895.

This sequence belongs to the RNA polymerase beta' chain family. In terms of assembly, the RNAP catalytic core consists of 2 alpha, 1 beta, 1 beta' and 1 omega subunit. When a sigma factor is associated with the core the holoenzyme is formed, which can initiate transcription. Mg(2+) serves as cofactor. The cofactor is Zn(2+).

The catalysed reaction is RNA(n) + a ribonucleoside 5'-triphosphate = RNA(n+1) + diphosphate. Its function is as follows. DNA-dependent RNA polymerase catalyzes the transcription of DNA into RNA using the four ribonucleoside triphosphates as substrates. In Bartonella tribocorum (strain CIP 105476 / IBS 506), this protein is DNA-directed RNA polymerase subunit beta'.